We begin with the raw amino-acid sequence, 526 residues long: Vitamin B6 transporter bsu1 (526 aa).

The tract at residues 1-53 (MASKIASLFSPSETASKDQHENVAEDLELGTASSQSDGIHETNSEYDEKKREE) is disordered. Residues 38 to 53 (GIHETNSEYDEKKREE) show a composition bias toward basic and acidic residues. The next 12 helical transmembrane spans lie at 81–101 (WSIV…SNGF), 118–138 (VATL…MFLG), 147–167 (KPVY…CALP), 173–192 (MIIS…TNVA), 204–224 (AGVP…GAPM), 238–257 (WLYY…ILII), 314–330 (LYNF…LTAI), 349–366 (YLSG…QPIQ), 387–407 (FTSA…FAFT), 413–432 (PWMS…GHNW), 444–461 (PLLS…SFIG), and 480–501 (WAVA…TFYF).

Belongs to the major facilitator superfamily. CAR1 family.

The protein resides in the membrane. Thiamine-regulated, high affinity import carrier of pyridoxine, pyridoxal and pyridoxamine. Also imports, but does not export, amiloride and so confers sensitivity. The chain is Vitamin B6 transporter bsu1 (bsu1) from Schizosaccharomyces pombe (strain 972 / ATCC 24843) (Fission yeast).